We begin with the raw amino-acid sequence, 392 residues long: Phosphoglycerate kinase (392 aa).

Substrate-binding positions include 21–23, Arg-36, 59–62, Arg-113, and Arg-146; these read DLN and HLGR. ATP is bound by residues Lys-197, Glu-319, and 345–348; that span reads GGDT.

This sequence belongs to the phosphoglycerate kinase family. As to quaternary structure, monomer.

The protein resides in the cytoplasm. The catalysed reaction is (2R)-3-phosphoglycerate + ATP = (2R)-3-phospho-glyceroyl phosphate + ADP. Its pathway is carbohydrate degradation; glycolysis; pyruvate from D-glyceraldehyde 3-phosphate: step 2/5. The chain is Phosphoglycerate kinase from Nitrosococcus oceani (strain ATCC 19707 / BCRC 17464 / JCM 30415 / NCIMB 11848 / C-107).